Reading from the N-terminus, the 192-residue chain is Leucine-rich repeat-containing protein 51 (192 aa).

LRR repeat units lie at residues 49–71, 80–101, and 103–124; these read SLTQSLWLNNNVLNDLRDFNQVA, NLAWIDLSFNDLTSIDPVLTTF, and NLSVLYLHGNSIQHLGEVNKLA. Residues 137–175 enclose the LRRCT domain; the sequence is NPMEEEKGYRQYVLCTLPHITTFDFSGVTKADRTTAEVW.

It localises to the cytoplasm. This chain is Leucine-rich repeat-containing protein 51, found in Macaca mulatta (Rhesus macaque).